Consider the following 180-residue polypeptide: UPF0227 protein ECA1814 (180 aa).

Belongs to the UPF0227 family.

The sequence is that of UPF0227 protein ECA1814 from Pectobacterium atrosepticum (strain SCRI 1043 / ATCC BAA-672) (Erwinia carotovora subsp. atroseptica).